The primary structure comprises 620 residues: Protein phosphatase 2C-like domain-containing protein 1 (620 aa).

The PPM-type phosphatase domain occupies 173 to 611; that stretch reads GIAICSNNNS…DSITVMVMFL (439 aa).

This sequence belongs to the PP2C family.

This Mus musculus (Mouse) protein is Protein phosphatase 2C-like domain-containing protein 1 (Pp2d1).